The following is a 359-amino-acid chain: 5-amino-6-(D-ribitylamino)uracil--L-tyrosine 4-hydroxyphenyl transferase (359 aa).

Positions 45-282 (VTYVLNANIN…VYAISRIFFK (238 aa)) constitute a Radical SAM core domain. Positions 59, 63, and 66 each coordinate [4Fe-4S] cluster.

This sequence belongs to the radical SAM superfamily. CofH family. In terms of assembly, consists of two subunits, CofG and CofH. The cofactor is [4Fe-4S] cluster.

It catalyses the reaction 5-amino-6-(D-ribitylamino)uracil + L-tyrosine + S-adenosyl-L-methionine = 5-amino-5-(4-hydroxybenzyl)-6-(D-ribitylimino)-5,6-dihydrouracil + 2-iminoacetate + 5'-deoxyadenosine + L-methionine + H(+). Its pathway is cofactor biosynthesis; coenzyme F0 biosynthesis. Catalyzes the radical-mediated synthesis of 5-amino-5-(4-hydroxybenzyl)-6-(D-ribitylimino)-5,6-dihydrouracil from 5-amino-6-(D-ribitylamino)uracil and L-tyrosine. The protein is 5-amino-6-(D-ribitylamino)uracil--L-tyrosine 4-hydroxyphenyl transferase of Methanococcus vannielii (strain ATCC 35089 / DSM 1224 / JCM 13029 / OCM 148 / SB).